Here is a 444-residue protein sequence, read N- to C-terminus: Transcriptional regulatory protein GlrR (444 aa).

Positions 7 to 121 (HLLLVDDDPG…ALYQAIDDAL (115 aa)) constitute a Response regulatory domain. 4-aspartylphosphate is present on aspartate 56. The region spanning 136–366 (IVTRSPLMLR…VNVIEQCVAL (231 aa)) is the Sigma-54 factor interaction domain. ATP-binding positions include 164-171 (GQSGTGKE) and 227-236 (AEGGTLFLDE). Positions 414–433 (VTHAARMAGRNRTEFYKLLS) form a DNA-binding region, H-T-H motif.

Phosphorylated by GlrK.

The protein resides in the cytoplasm. Its function is as follows. Member of the two-component regulatory system GlrR/GlrK that up-regulates transcription of the glmY sRNA when cells enter the stationary growth phase. Regulates glmY transcription by binding to three conserved sites in the purL-glmY intergenic region. The protein is Transcriptional regulatory protein GlrR (glrR) of Escherichia coli (strain K12).